The primary structure comprises 121 residues: Fluoride-specific ion channel FluC 2 (121 aa).

The next 4 helical transmembrane spans lie at 3–23, 31–51, 64–84, and 92–112; these read YLFI…LSFI, IGTF…GTLA, GITT…FELV, and FILL…LCFL. Positions 71 and 74 each coordinate Na(+).

This sequence belongs to the fluoride channel Fluc/FEX (TC 1.A.43) family.

It localises to the cell membrane. The catalysed reaction is fluoride(in) = fluoride(out). Na(+) is not transported, but it plays an essential structural role and its presence is essential for fluoride channel function. In terms of biological role, fluoride-specific ion channel. Important for reducing fluoride concentration in the cell, thus reducing its toxicity. The polypeptide is Fluoride-specific ion channel FluC 2 (Staphylococcus saprophyticus subsp. saprophyticus (strain ATCC 15305 / DSM 20229 / NCIMB 8711 / NCTC 7292 / S-41)).